A 99-amino-acid polypeptide reads, in one-letter code: Nucleoid-associated protein str1598 (99 aa).

The protein belongs to the YbaB/EbfC family. As to quaternary structure, homodimer.

Its subcellular location is the cytoplasm. The protein localises to the nucleoid. Its function is as follows. Binds to DNA and alters its conformation. May be involved in regulation of gene expression, nucleoid organization and DNA protection. This Streptococcus thermophilus (strain CNRZ 1066) protein is Nucleoid-associated protein str1598.